A 425-amino-acid polypeptide reads, in one-letter code: tRNA(Ile)-lysidine synthase (425 aa).

27–32 (SGGLDS) lines the ATP pocket.

This sequence belongs to the tRNA(Ile)-lysidine synthase family.

It localises to the cytoplasm. It carries out the reaction cytidine(34) in tRNA(Ile2) + L-lysine + ATP = lysidine(34) in tRNA(Ile2) + AMP + diphosphate + H(+). Ligates lysine onto the cytidine present at position 34 of the AUA codon-specific tRNA(Ile) that contains the anticodon CAU, in an ATP-dependent manner. Cytidine is converted to lysidine, thus changing the amino acid specificity of the tRNA from methionine to isoleucine. This Streptococcus pneumoniae (strain 70585) protein is tRNA(Ile)-lysidine synthase.